The primary structure comprises 727 residues: Sodium-dependent neutral amino acid transporter SLC6A17 (727 aa).

Over 1-68 the chain is Cytoplasmic; it reads MPKNSKVTQR…DRPAWNSKLQ (68 aa). Phosphoserine occurs at positions 13 and 20. Residues 69 to 89 form a helical membrane-spanning segment; sequence YILAQIGFSVGLGNIWRFPYL. Residues 90–96 lie on the Extracellular side of the membrane; sequence CQKNGGG. A helical transmembrane segment spans residues 97-116; sequence AYLVPYLVLLIIIGIPLFFL. Residues 117–140 are Cytoplasmic-facing; it reads ELAVGQRIRRGSIGVWHYVCPRLG. The helical transmembrane segment at 141 to 161 threads the bilayer; it reads GIGFSSCIVCLFVGLYYNVII. At 162-224 the chain is on the extracellular side; it reads GWSVFYFFKS…NSISESGGLN (63 aa). A glycan (N-linked (GlcNAc...) asparagine) is linked at Asn186. A helical transmembrane segment spans residues 225 to 243; it reads WKMTLCLLVAWSIVGMAVV. Residues 244 to 251 are Cytoplasmic-facing; it reads KGIQSSGK. The chain crosses the membrane as a helical span at residues 252 to 269; sequence VMYFSSLFPYVVLACFLV. The Extracellular portion of the chain corresponds to 270–304; sequence RGLLLRGAVDGILHMFTPKLDKMLDPQVWREAATQ. A helical transmembrane segment spans residues 305–322; it reads VFFALGLGFGGVIAFSSY. Residues 323–333 lie on the Cytoplasmic side of the membrane; it reads NKQDNNCHFDA. The chain crosses the membrane as a helical span at residues 334–355; it reads ALVSFINFFTSVLATLVVFAVL. Topologically, residues 356–451 are extracellular; the sequence is GFKANIMNEK…FIAFTEAMTH (96 aa). Tyr377 is modified (phosphotyrosine). The N-linked (GlcNAc...) asparagine glycan is linked to Asn393. A helical transmembrane segment spans residues 452–471; the sequence is FPASPFWSVMFFLMLINLGL. At 472 to 494 the chain is on the cytoplasmic side; the sequence is GSMIGTMAGITTPIIDTFKVPKE. The helical transmembrane segment at 495-513 threads the bilayer; it reads MFTVGCCVFAFFVGLLFVQ. Residues 514–528 are Extracellular-facing; that stretch reads RSGNYFVTMFDDYSA. A helical membrane pass occupies residues 529-549; it reads TLPLTVIVILENIAVAWIYGT. The Cytoplasmic segment spans residues 550-569; sequence KKFMQELTEMLGFQPYRFYF. A helical membrane pass occupies residues 570–591; it reads YMWKFVSPLCMAVLTTASIIQL. The Extracellular segment spans residues 592–618; the sequence is GVSPPGYSAWIKEEAAERYLYFPNWAM. Residues 619 to 641 form a helical membrane-spanning segment; sequence ALLITLIAVATLPIPVVFILRHF. Residues 642-727 are Cytoplasmic-facing; that stretch reads HLLSDGSNTL…LLASTPESEL (86 aa). Residues Ser665 and Ser701 each carry the phosphoserine modification. The interval 680-727 is disordered; sequence VPSEAPSPMPTHRSYLGPGSTSPLDNSNNPNGRYGSGYLLASTPESEL. A compositionally biased stretch (polar residues) spans 698–710; it reads GSTSPLDNSNNPN.

The protein belongs to the sodium:neurotransmitter symporter (SNF) (TC 2.A.22) family. In terms of tissue distribution, expressed in the brain. The strongest expression levels in embryonic, postnatal, and adult stages are found in both cortical and hippocampal tissues.

It is found in the cytoplasmic vesicle. The protein localises to the secretory vesicle. The protein resides in the synaptic vesicle membrane. It localises to the postsynapse. Its subcellular location is the presynapse. It catalyses the reaction L-proline(in) + Na(+)(in) = L-proline(out) + Na(+)(out). It carries out the reaction L-leucine(in) + Na(+)(in) = L-leucine(out) + Na(+)(out). The enzyme catalyses glycine(in) + Na(+)(in) = glycine(out) + Na(+)(out). The catalysed reaction is L-alanine(in) + Na(+)(in) = L-alanine(out) + Na(+)(out). It catalyses the reaction L-glutamine(in) + Na(+)(in) = L-glutamine(out) + Na(+)(out). Its function is as follows. Synaptic vesicle transporter with apparent selectivity for neutral amino acids. The transport is sodium-coupled but chloride-independent, likely driven by the proton electrochemical gradient generated by vacuolar H(+)-ATPase in an overall electrogenic mechanism. May contribute to the synaptic uptake of neurotransmitter precursors in a process coupled in part to vesicle exocytosis. In Mus musculus (Mouse), this protein is Sodium-dependent neutral amino acid transporter SLC6A17.